We begin with the raw amino-acid sequence, 115 residues long: uncharacterized protein (115 aa).

The disordered stretch occupies residues 1 to 74 (MGTGLRSQSL…VPGSLGDTEQ (74 aa)).

This is an uncharacterized protein from Homo sapiens (Human).